Reading from the N-terminus, the 232-residue chain is AA9 family lytic polysaccharide monooxygenase C (232 aa).

The signal sequence occupies residues 1-19 (MKAAVSLALLVAVAGAASA). Residues H20 and H91 each coordinate Cu(2+). The cysteines at positions 61 and 180 are disulfide-linked. O2 contacts are provided by H166 and Q175. Y177 contacts Cu(2+). N-linked (GlcNAc...) asparagine glycosylation is present at N184.

The protein belongs to the polysaccharide monooxygenase AA9 family. It depends on Cu(2+) as a cofactor.

It is found in the secreted. It catalyses the reaction [(1-&gt;4)-beta-D-glucosyl]n+m + reduced acceptor + O2 = 4-dehydro-beta-D-glucosyl-[(1-&gt;4)-beta-D-glucosyl]n-1 + [(1-&gt;4)-beta-D-glucosyl]m + acceptor + H2O.. In terms of biological role, lytic polysaccharide monooxygenase (LPMO) that depolymerizes crystalline and amorphous polysaccharides via the oxidation of scissile alpha- or beta-(1-4)-glycosidic bonds, yielding C1 or C4 oxidation products. Catalysis by LPMOs requires the reduction of the active-site copper from Cu(II) to Cu(I) by a reducing agent and H(2)O(2) or O(2) as a cosubstrate. The chain is AA9 family lytic polysaccharide monooxygenase C from Malbranchea cinnamomea (Thermophilic fungus).